An 871-amino-acid chain; its full sequence is Alanine--tRNA ligase (871 aa).

Positions 561, 565, 665, and 669 each coordinate Zn(2+).

The protein belongs to the class-II aminoacyl-tRNA synthetase family. Zn(2+) serves as cofactor.

The protein resides in the cytoplasm. The catalysed reaction is tRNA(Ala) + L-alanine + ATP = L-alanyl-tRNA(Ala) + AMP + diphosphate. Catalyzes the attachment of alanine to tRNA(Ala) in a two-step reaction: alanine is first activated by ATP to form Ala-AMP and then transferred to the acceptor end of tRNA(Ala). Also edits incorrectly charged Ser-tRNA(Ala) and Gly-tRNA(Ala) via its editing domain. This is Alanine--tRNA ligase from Dehalococcoides mccartyi (strain ATCC BAA-2100 / JCM 16839 / KCTC 5957 / BAV1).